The sequence spans 484 residues: Protein arginine methyltransferase NDUFAF7 homolog, mitochondrial (484 aa).

Residues 1-12 (MFRSITQRVIRN) constitute a mitochondrion transit peptide.

It belongs to the NDUFAF7 family. In terms of assembly, homodimer. Interacts with ndufs2.

Its subcellular location is the mitochondrion. It catalyses the reaction L-arginyl-[protein] + 2 S-adenosyl-L-methionine = N(omega),N(omega)'-dimethyl-L-arginyl-[protein] + 2 S-adenosyl-L-homocysteine + 2 H(+). Functionally, involved in the assembly or stability of mitochondrial NADH:ubiquinone oxidoreductase complex (complex I). Acts as an arginine methyltransferase and probably acts by mediating arginine methylation of ndufs2. The protein is Protein arginine methyltransferase NDUFAF7 homolog, mitochondrial of Dictyostelium discoideum (Social amoeba).